Here is a 227-residue protein sequence, read N- to C-terminus: 2-C-methyl-D-erythritol 4-phosphate cytidylyltransferase (227 aa).

Belongs to the IspD/TarI cytidylyltransferase family. IspD subfamily.

It carries out the reaction 2-C-methyl-D-erythritol 4-phosphate + CTP + H(+) = 4-CDP-2-C-methyl-D-erythritol + diphosphate. Its pathway is isoprenoid biosynthesis; isopentenyl diphosphate biosynthesis via DXP pathway; isopentenyl diphosphate from 1-deoxy-D-xylulose 5-phosphate: step 2/6. In terms of biological role, catalyzes the formation of 4-diphosphocytidyl-2-C-methyl-D-erythritol from CTP and 2-C-methyl-D-erythritol 4-phosphate (MEP). This Nostoc punctiforme (strain ATCC 29133 / PCC 73102) protein is 2-C-methyl-D-erythritol 4-phosphate cytidylyltransferase.